Consider the following 2235-residue polypeptide: Bridge-like lipid transfer protein family member 2 (2235 aa).

Positions 1 to 31 are cleaved as a signal peptide; sequence MPLFFSALLVLLLVALSALFLGRWLVVRLAT. The interval 29-108 is transmembrane domain; sequence LATKWCQRKL…LQKVSDLSAP (80 aa). Phosphoserine is present on Ser-563. Asn-730 carries N-linked (GlcNAc...) asparagine glycosylation. The tract at residues 1495 to 1529 is disordered; it reads PQMPAKKPKRGVPTSASAPPRVNTPSFSGQPDKGS. The stretch at 1813 to 1885 forms a coiled coil; the sequence is SILHLQEAVR…LNILIRCFKD (73 aa). Phosphoserine is present on residues Ser-1846, Ser-2090, and Ser-2094. Positions 2074–2099 are disordered; it reads GKGVAQGLTRSSGVRRSFRKSPEHPV.

Belongs to the SABRE family. In terms of tissue distribution, expressed in pancreas, placenta and up-regulated in breast carcinoma epithelial cells, ductal in situ carcinoma (DCIS), invasive breast carcinoma (IBC) and metastatic breast carcinoma cells (MET).

The protein resides in the cell membrane. It localises to the endoplasmic reticulum membrane. The protein localises to the mitochondrion membrane. Tube-forming lipid transport protein which binds to phosphatidylinositols and affects phosphatidylinositol-4,5-bisphosphate (PtdIns-4,5-P2) distribution. This is Bridge-like lipid transfer protein family member 2 from Homo sapiens (Human).